The following is a 344-amino-acid chain: uncharacterized protein (344 aa).

This sequence belongs to the MG414/MG415 family.

This is an uncharacterized protein from Mycoplasma pneumoniae (strain ATCC 29342 / M129 / Subtype 1) (Mycoplasmoides pneumoniae).